We begin with the raw amino-acid sequence, 52 residues long: Insulin-2 (52 aa).

Intrachain disulfides connect cysteine 7/cysteine 38, cysteine 19/cysteine 51, and cysteine 37/cysteine 42.

The protein belongs to the insulin family. As to quaternary structure, heterodimer of a B chain and an A chain linked by two disulfide bonds.

Its subcellular location is the secreted. Its function is as follows. Insulin decreases blood glucose concentration. It increases cell permeability to monosaccharides, amino acids and fatty acids. It accelerates glycolysis, the pentose phosphate cycle, and glycogen synthesis in liver. The protein is Insulin-2 of Huso dauricus (Kaluga sturgeon).